We begin with the raw amino-acid sequence, 174 residues long: Adenylate kinase (174 aa).

Residues 12 to 41 (STGDMLRAAIKAGTPLGLEAKKIIDEGGLV) form an NMP region. AMP contacts are provided by residues threonine 13, arginine 18, 39–41 (GLV), 67–70 (GFPR), and glutamine 74. Residues 104–141 (GRRVHLASGRTYHIAYNPPKVEGKDDVTGEDLIQRDDD) form an LID region. ATP is bound by residues arginine 105 and 114 to 115 (TY). AMP-binding residues include arginine 138 and arginine 149.

The protein belongs to the adenylate kinase family. Monomer.

It localises to the cytoplasm. It carries out the reaction AMP + ATP = 2 ADP. The protein operates within purine metabolism; AMP biosynthesis via salvage pathway; AMP from ADP: step 1/1. Catalyzes the reversible transfer of the terminal phosphate group between ATP and AMP. Plays an important role in cellular energy homeostasis and in adenine nucleotide metabolism. This chain is Adenylate kinase, found in Neisseria animalis.